A 105-amino-acid polypeptide reads, in one-letter code: MATLQQQKIRIRLQAFDRRLLDTSCEKIVDTANRTNATAIGPIPLPTKRRIYCVLRSPHVDKDSREHFETRTHRRIIDIYQPSSKTIDALMKLDLPSGVDIEVKL.

The protein belongs to the universal ribosomal protein uS10 family. Part of the 30S ribosomal subunit.

Its function is as follows. Involved in the binding of tRNA to the ribosomes. The chain is Small ribosomal subunit protein uS10 from Nostoc punctiforme (strain ATCC 29133 / PCC 73102).